Reading from the N-terminus, the 250-residue chain is Coproheme decarboxylase (250 aa).

Fe-coproporphyrin III is bound by residues R131, 145–149 (YPMNK), H172, and Q185. Y145 is a catalytic residue.

Belongs to the ChdC family. Type 1 subfamily. It depends on Fe-coproporphyrin III as a cofactor.

It catalyses the reaction Fe-coproporphyrin III + 2 H2O2 + 2 H(+) = heme b + 2 CO2 + 4 H2O. It carries out the reaction Fe-coproporphyrin III + H2O2 + H(+) = harderoheme III + CO2 + 2 H2O. The catalysed reaction is harderoheme III + H2O2 + H(+) = heme b + CO2 + 2 H2O. The protein operates within porphyrin-containing compound metabolism; protoheme biosynthesis. Functionally, involved in coproporphyrin-dependent heme b biosynthesis. Catalyzes the decarboxylation of Fe-coproporphyrin III (coproheme) to heme b (protoheme IX), the last step of the pathway. The reaction occurs in a stepwise manner with a three-propionate intermediate. The chain is Coproheme decarboxylase from Staphylococcus aureus (strain Mu50 / ATCC 700699).